The following is a 123-amino-acid chain: Potassium voltage-gated channel subfamily E member 2 (123 aa).

2 N-linked (GlcNAc...) asparagine glycosylation sites follow: N6 and N29. The helical transmembrane segment at 49–69 (VILYLMVMIGMFSFIVVAILV) threads the bilayer. At 70 to 123 (STVKSKRREHSQHPYHQYIVEDWQEKYKSQILHLEDSKATIHENMGATGFTVSP) the chain is on the cytoplasmic side.

Belongs to the potassium channel KCNE family. Interacts with KCNB1. Associates with KCNH2/ERG1. May associate with KCNQ2 and KCNQ3. Associates with HCN1 and probably HCN2. Heteromultimer with KCNC2. Interacts with KCNC2. Interacts with KCNQ1. Forms a heterooligomer complex with KCNQ1 that targets to the membrane raft and leading to currents with an apparently instantaneous activation, a rapid deactivation process and a linear current-voltage relationship and decreases the amplitude of the outward current.

The protein localises to the cell membrane. The protein resides in the apical cell membrane. In terms of biological role, ancillary protein that functions as a regulatory subunit of the voltage-gated potassium (Kv) channel complex composed of pore-forming and potassium-conducting alpha subunits and of regulatory beta subunits. KCNE2 beta subunit modulates the gating kinetics and enhances stability of the channel complex. Alters the gating of the delayed rectifier Kv channel containing KCNB1 alpha subunit. Associates with KCNH2/HERG alpha subunit Kv channel to form the rapidly activating component of the delayed rectifying potassium current (IKr) in heart. May associate with KCNQ2 and/or KCNQ3 alpha subunits to modulate the native M-type current. May associate with HCN1 and HCN2 channel subunits to increase potassium current. Forms a heterooligomer complex with KCNQ1/KVLQT1 alpha subunits which leads to currents with an apparently instantaneous activation, a rapid deactivation process and a linear current-voltage relationship and decreases the amplitude of the outward current. KCNQ1-KCNE2 channel associates with Na(+)-coupled myo-inositol symporter in the apical membrane of choroid plexus epithelium and regulates the myo-inositol gradient between blood and cerebrospinal fluid with an impact on neuron excitability. The protein is Potassium voltage-gated channel subfamily E member 2 of Mus musculus (Mouse).